The chain runs to 89 residues: MQTSNSESVSAALTEILRDDMNVDIRRVTRESRLIDDVGLDSVAFAVGMVAIEDRLGVALTEEDLLSCDTVGDLEAAIQAKVPSSPSGQ.

The 76-residue stretch at 7 to 82 (ESVSAALTEI…DLEAAIQAKV (76 aa)) folds into the Carrier domain. S42 is subject to O-(pantetheine 4'-phosphoryl)serine.

4'-phosphopantetheine is transferred from CoA to a specific serine of apo-ACP, leading to the activated holo-ACP form.

The protein localises to the cytoplasm. It participates in siderophore biosynthesis; mycobactin biosynthesis. In terms of biological role, acyl carrier protein involved in the formation of acyl-S-ACP intermediates within the mycobactin biosynthesis process. This Mycobacterium sp. (strain MCS) protein is Acyl carrier protein MbtL (mbtL).